The sequence spans 184 residues: Putative serine carboxypeptidase-like 52 (184 aa).

The N-terminal stretch at 1–22 (MRTFSPKLLLLLLLVLRHHAES) is a signal peptide. N-linked (GlcNAc...) asparagine glycosylation occurs at asparagine 93.

The protein belongs to the peptidase S10 family.

The protein localises to the secreted. This Arabidopsis thaliana (Mouse-ear cress) protein is Putative serine carboxypeptidase-like 52 (SCPL52).